A 242-amino-acid chain; its full sequence is N-alpha-acetyltransferase 60 (242 aa).

Topologically, residues 1-192 are cytoplasmic; that stretch reads MTDVVPTTAL…GGHPPWTIFD (192 aa). The N-acetyltransferase domain maps to 13-182; it reads IQLRLLCHDD…DGFTYVLYIN (170 aa). Tyr38 provides a ligand contact to substrate. Tyr97 is an active-site residue. Leu99 contacts substrate. Residues 101–103 and 109–114 contribute to the acetyl-CoA site; these read LGV and KHGIGS. Residue His138 is part of the active site. Residues Asn143 and 150-153 contribute to the acetyl-CoA site; that span reads YENR. The required for homodimerization stretch occupies residues 162-173; sequence PYYYSIRGVLKD. Tyr165 lines the substrate pocket. Residues 193–236 constitute an intramembrane region (helical); that stretch reads YIHHIGSALASLSPCSIPQRIYRQAQNLLRSFLPWSGISSKSGI. The Cytoplasmic portion of the chain corresponds to 237-242; that stretch reads EYSRTM.

This sequence belongs to the acetyltransferase family. NAA60 subfamily. As to quaternary structure, monomer and homodimer; monomer in presence of substrate and homodimer in its absence.

The protein localises to the golgi apparatus membrane. It carries out the reaction N-terminal L-methionyl-[transmembrane protein] + acetyl-CoA = N-terminal N(alpha)-acetyl-L-methionyl-[transmembrane protein] + CoA + H(+). It catalyses the reaction L-lysyl-[protein] + acetyl-CoA = N(6)-acetyl-L-lysyl-[protein] + CoA + H(+). Functionally, N-alpha-acetyltransferase that specifically mediates the acetylation of N-terminal residues of the transmembrane proteins, with a strong preference for N-termini facing the cytosol. Displays N-terminal acetyltransferase activity towards a range of N-terminal sequences including those starting with Met-Lys, Met-Val, Met-Ala and Met-Met. Required for normal chromosomal segregation during anaphase. May also show histone acetyltransferase activity; such results are however unclear in vivo and would require additional experimental evidences. The sequence is that of N-alpha-acetyltransferase 60 (naa60) from Danio rerio (Zebrafish).